We begin with the raw amino-acid sequence, 252 residues long: NAD-dependent protein deacetylase (252 aa).

The Deacetylase sirtuin-type domain occupies 1-248 (MYLVEEAKKV…PEVISHIQSL (248 aa)). NAD(+) is bound by residues Ala26, Thr30, Phe37, Arg38, Gln102, Val104, Asp105, and His120. Phe37 contacts nicotinamide. 2 residues coordinate nicotinamide: Val104 and Asp105. His120 (proton acceptor) is an active-site residue. Positions 128, 131, 153, and 155 each coordinate Zn(2+). Positions 191, 192, 216, and 234 each coordinate NAD(+).

The protein belongs to the sirtuin family. Class U subfamily. The cofactor is Zn(2+).

The protein localises to the cytoplasm. The enzyme catalyses N(6)-acetyl-L-lysyl-[protein] + NAD(+) + H2O = 2''-O-acetyl-ADP-D-ribose + nicotinamide + L-lysyl-[protein]. Its function is as follows. NAD-dependent protein deacetylase which modulates the activities of several enzymes which are inactive in their acetylated form. Deacetylates the N-terminal lysine residue of Alba, the major archaeal chromatin protein and that, in turn, increases Alba's DNA binding affinity, thereby repressing transcription. The protein is NAD-dependent protein deacetylase of Sulfolobus acidocaldarius (strain ATCC 33909 / DSM 639 / JCM 8929 / NBRC 15157 / NCIMB 11770).